A 703-amino-acid polypeptide reads, in one-letter code: Probable ATP-dependent RNA helicase DHX35 (703 aa).

In terms of domain architecture, Helicase ATP-binding spans 64–229; that stretch reads LYLIENYQTV…FNQNETSDPA (166 aa). An ATP-binding site is contributed by 77 to 84; it reads GETGCGKS. The DEAH box signature appears at 176-179; sequence DEAH. The region spanning 261-438 is the Helicase C-terminal domain; sequence TVETVVKIHQ…PVILQLKALG (178 aa).

This sequence belongs to the DEAD box helicase family. DEAH subfamily. Identified in the spliceosome C complex.

It catalyses the reaction ATP + H2O = ADP + phosphate + H(+). Its function is as follows. May be involved in pre-mRNA splicing. This is Probable ATP-dependent RNA helicase DHX35 (DHX35) from Homo sapiens (Human).